Here is a 662-residue protein sequence, read N- to C-terminus: Aprataxin-like protein (662 aa).

Residues 4–108 (SSALIKDISK…ISKDFVSTSL (105 aa)) form the HIT domain. The segment at 381–403 (LRCNQCEFVTNMLLDLKAHLYQH) adopts a C2H2-type zinc-finger fold. Residues 482–662 (KNINGPSVNM…PAPPSNSKPS (181 aa)) are disordered. Residues 490-500 (NMMNQNNPNNP) are compositionally biased toward low complexity. Composition is skewed to polar residues over residues 501–513 (FRNT…QSQK) and 560–569 (GHQQFPNASS). Residues 570–582 (VGGGQTGLPGQGQ) are compositionally biased toward gly residues. Residues 588–599 (WNSNKIFNQQNR) show a composition bias toward polar residues. Low complexity predominate over residues 600–626 (QNTVQAQPQAQNQQTNQQQIQNSNKNQ). The span at 653 to 662 (PAPPSNSKPS) shows a compositional bias: pro residues.

The protein resides in the nucleus. DNA-binding protein involved in single-strand DNA break repair, double-strand DNA break repair and base excision repair. Resolves abortive DNA ligation intermediates formed either at base excision sites, or when DNA ligases attempt to repair non-ligatable breaks induced by reactive oxygen species. Catalyzes the release of adenylate groups covalently linked to 5'-phosphate termini, resulting in the production of 5'-phosphate termini that can be efficiently rejoined. This chain is Aprataxin-like protein, found in Drosophila melanogaster (Fruit fly).